Reading from the N-terminus, the 689-residue chain is UvrABC system protein C (689 aa).

Polar residues predominate over residues 1–19 (MTSDSSDTAKQIGSGQPSG). The tract at residues 1 to 59 (MTSDSSDTAKQIGSGQPSGSPADMRRRDGVAPEQEVDPASLETDEDDEARLPDLPDEPV) is disordered. The segment covering 42 to 59 (ETDEDDEARLPDLPDEPV) has biased composition (acidic residues). The 79-residue stretch at 83 to 161 (TSPGVYRMMN…IKQLRPRFNV (79 aa)) folds into the GIY-YIG domain. Residues 271–306 (RAVKEDLARAMEQAAADLAFERAALYRDRLAALSAI) enclose the UVR domain.

Belongs to the UvrC family. As to quaternary structure, interacts with UvrB in an incision complex.

Its subcellular location is the cytoplasm. Its function is as follows. The UvrABC repair system catalyzes the recognition and processing of DNA lesions. UvrC both incises the 5' and 3' sides of the lesion. The N-terminal half is responsible for the 3' incision and the C-terminal half is responsible for the 5' incision. The protein is UvrABC system protein C of Nitrobacter winogradskyi (strain ATCC 25391 / DSM 10237 / CIP 104748 / NCIMB 11846 / Nb-255).